The following is a 979-amino-acid chain: Protocadherin alpha-9 (979 aa).

A signal peptide spans 1–59 (MRLGNRPEDIRTCVHLRWHIHGLLRQENASVVISKCLRHGAWRLLLWLLLLATWDVGSG). At 60 to 726 (QLHYSVPEEA…RREASLMDVN (667 aa)) the chain is on the extracellular side. Cadherin domains lie at 64–163 (SVPE…PPIF), 164–272 (SVAE…APVF), 273–380 (DRSV…APEI), 381–485 (VLTS…APAF), 486–595 (AHPE…PPTL), and 611–707 (VSRS…VPKA). 2 N-linked (GlcNAc...) asparagine glycosylation sites follow: asparagine 287 and asparagine 295. Residue asparagine 578 is glycosylated (N-linked (GlcNAc...) asparagine). Residues 727 to 747 (VYLIIAICAVSSLLVLTLLLY) form a helical membrane-spanning segment. Over 748-979 (TALRCSAVPM…GNSTTDNSDQ (232 aa)) the chain is Cytoplasmic. PXXP repeat units lie at residues 763–766 (LGKP), 828–831 (PRQP), 861–864 (PGGP), 902–905 (PGNP), and 920–923 (PGSP). The 5 X 4 AA repeats of P-X-X-P stretch occupies residues 763–923 (LGKPTLVCSS…PDKFIIPGSP (161 aa)). Residues 859 to 979 (AGPGGPDQQW…GNSTTDNSDQ (121 aa)) form a disordered region. Basic and acidic residues predominate over residues 938-952 (DKSDFITFGKKEETK).

It is found in the cell membrane. Its function is as follows. Potential calcium-dependent cell-adhesion protein. May be involved in the establishment and maintenance of specific neuronal connections in the brain. The protein is Protocadherin alpha-9 of Mus musculus (Mouse).